The chain runs to 530 residues: T-complex protein 1 subunit gamma (530 aa).

It belongs to the TCP-1 chaperonin family. As to quaternary structure, heterooligomeric complex of about 850 to 900 kDa that forms two stacked rings, 12 to 16 nm in diameter.

The protein localises to the cytoplasm. In terms of biological role, molecular chaperone; assists the folding of proteins upon ATP hydrolysis. Known to play a role, in vitro, in the folding of actin and tubulin. This chain is T-complex protein 1 subunit gamma (cct3), found in Dictyostelium discoideum (Social amoeba).